The primary structure comprises 209 residues: Redox-sensing transcriptional repressor Rex (209 aa).

The segment at residues 16–55 (LYYRFIQNLSLSGKQRVSSAELSEAVKVDSATIRRDFSYF) is a DNA-binding region (H-T-H motif). An NAD(+)-binding site is contributed by 90–95 (GVGNLG).

It belongs to the transcriptional regulatory Rex family. In terms of assembly, homodimer.

It localises to the cytoplasm. Functionally, modulates transcription in response to changes in cellular NADH/NAD(+) redox state. In Bacillus thuringiensis (strain Al Hakam), this protein is Redox-sensing transcriptional repressor Rex.